Consider the following 890-residue polypeptide: MKRQSERDSSPSGRGSSSSAKRPREREREAEAGGRRAAHKASGGAKHPVPARARDKPRGSGSGGGGHRDGRGTGDANHRASSGRSSGSGAGGGGRGGKASGDPGASGMSPRASPLPPPPPPPGAEPACPGSSAAAPEYKTLLISSLSPALPAEHLEDRLFHQFKRFGEISLRLSHTPELGRVAYVNFRHPQDAREARQHALARQLLLYDRPLKVEPVYLRGGGGSSRRSSSSSAAASTPPPGPPAPADPLGYLPLHGGYQYKQRSLSPVAAPPLREPRARHAAAAFALDAAAAAAVGLSRERALDYYGLYDDRGRPYGYPAVCEEDLMPEDDQRATRNLFIGNLDHSVSEVELRRAFEKYGIIEEVVIKRPARGQGGAYAFLKFQNLDMAHRAKVAMSGRVIGRNPIKIGYGKANPTTRLWVGGLGPNTSLAALAREFDRFGSIRTIDHVKGDSFAYIQYESLDAAQAACAKMRGFPLGGPDRRLRVDFAKAEETRYPQQYQPSPLPVHYELLTDGYTRHRNLDADLVRDRTPPHLLYSDRDRTFLEGDWTSPSKSSDRRNSLEGYSRSVRSRSGERWGADGDRGLPKPWEERRKRRSLSSDRGRTTHSPYEERSRTKGSGQQSERGSDRTPERSRKENHSSEGTKESSSNSLSNSRHGAEERGHHHHHHEAADSSHGKKARDSERNHRTTEAEPKPLEEPKHETKKLKNLSEYAQTLQLGWNGLLVLKNSCFPTSMHILEGDQGVISSLLKDHTSGSKLTQLKIAQRLRLDQPKLDEVTRRIKQGSPNGYAVLLATQATPSGLGTEGMPTVEPGLQRRLLRNLVSYLKQKQAAGVISLPVGGSKGRDGTGMLYAFPPCDFSQQYLQSALRTLGKLEEEHMVIVIVRDTA.

Residues 1 to 133 form a disordered region; sequence MKRQSERDSS…AEPACPGSSA (133 aa). Low complexity predominate over residues 10-20; it reads SPSGRGSSSSA. 2 stretches are compositionally biased toward basic and acidic residues: residues 22–34 and 66–78; these read RPREREREAEAGG and GHRDGRGTGDANH. The segment covering 86–99 has biased composition (gly residues); sequence SGSGAGGGGRGGKA. 2 positions are modified to phosphoserine: serine 109 and serine 113. Residues 113 to 124 show a composition bias toward pro residues; the sequence is SPLPPPPPPPGA. In terms of domain architecture, RRM 1 spans 139–219; that stretch reads KTLLISSLSP…RPLKVEPVYL (81 aa). A Glycyl lysine isopeptide (Lys-Gly) (interchain with G-Cter in SUMO2) cross-link involves residue lysine 213. Residues 219–253 form a disordered region; it reads LRGGGGSSRRSSSSSAAASTPPPGPPAPADPLGYL. The span at 226-237 shows a compositional bias: low complexity; that stretch reads SRRSSSSSAAAS. Residues 238-247 show a composition bias toward pro residues; it reads TPPPGPPAPA. A phosphoserine mark is found at serine 265 and serine 267. RRM domains lie at 337-414 and 418-492; these read RNLF…YGKA and TRLW…FAKA. A Phosphothreonine modification is found at threonine 532. The interval 547–705 is disordered; that stretch reads EGDWTSPSKS…KPLEEPKHET (159 aa). Serine 552, serine 556, and serine 562 each carry phosphoserine. Composition is skewed to basic and acidic residues over residues 573 to 616 and 626 to 646; these read RSGE…ERSR and RGSDRTPERSRKENHSSEGTK. The Nuclear localization signal motif lies at 593–597; that stretch reads RRKRR. Positions 647 to 657 are enriched in low complexity; the sequence is ESSSNSLSNSR. A compositionally biased stretch (basic and acidic residues) spans 671–703; the sequence is EAADSSHGKKARDSERNHRTTEAEPKPLEEPKH. Residue lysine 702 forms a Glycyl lysine isopeptide (Lys-Gly) (interchain with G-Cter in SUMO2) linkage. The SPOC domain maps to 711-889; it reads LSEYAQTLQL…HMVIVIVRDT (179 aa). The interval 722 to 890 is interaction with Epstein-Barr virus BMLF1; it reads WNGLLVLKNS…MVIVIVRDTA (169 aa).

The protein belongs to the RRM Spen family. Component of the WMM complex, a N6-methyltransferase complex composed of a catalytic subcomplex, named MAC, and of an associated subcomplex, named MACOM. The MAC subcomplex is composed of METTL3 and METTL14. The MACOM subcomplex is composed of WTAP, ZC3H13, CBLL1/HAKAI, VIRMA, and, in some cases of RBM15 (RBM15 or RBM15B). May interact with NCOR2. Interacts with NXF1, the interaction is required to promote mRNA export. As to quaternary structure, (Microbial infection) Interacts (via the SPOC domain) with Epstein-Barr virus BMLF1 (via the N-terminus); the interaction is direct. Ubiquitously expressed.

The protein localises to the nucleus. Its subcellular location is the nucleoplasm. The protein resides in the nucleus speckle. It localises to the nucleus envelope. In terms of biological role, RNA-binding protein that acts as a key regulator of N6-methyladenosine (m6A) methylation of RNAs, thereby regulating different processes, such as alternative splicing of mRNAs and X chromosome inactivation mediated by Xist RNA. Associated component of the WMM complex, a complex that mediates N6-methyladenosine (m6A) methylation of RNAs, a modification that plays a role in the efficiency of mRNA splicing and RNA processing. Plays a key role in m6A methylation, possibly by binding target RNAs and recruiting the WMM complex. Involved in random X inactivation mediated by Xist RNA: acts by binding Xist RNA and recruiting the WMM complex, which mediates m6A methylation, leading to target YTHDC1 reader on Xist RNA and promoting transcription repression activity of Xist. Functions in the regulation of alternative or illicit splicing, possibly by regulating m6A methylation. Inhibits pre-mRNA splicing. Also functions as a mRNA export factor by acting as a cofactor for the nuclear export receptor NXF1. The chain is Putative RNA-binding protein 15B from Homo sapiens (Human).